Consider the following 190-residue polypeptide: dCTP deaminase, dUMP-forming (190 aa).

DCTP-binding positions include 101 to 106 (KSSLGR), D119, 127 to 129 (TLE), Q148, Y162, and Q174. E129 acts as the Proton donor/acceptor in catalysis. Residues 162–190 (YGSASAGSKYQGQRGPTPSRSYENFIKNT) are disordered. Residues 166–190 (SAGSKYQGQRGPTPSRSYENFIKNT) show a composition bias toward polar residues.

This sequence belongs to the dCTP deaminase family. As to quaternary structure, homotrimer.

It carries out the reaction dCTP + 2 H2O = dUMP + NH4(+) + diphosphate. Its pathway is pyrimidine metabolism; dUMP biosynthesis; dUMP from dCTP: step 1/1. Bifunctional enzyme that catalyzes both the deamination of dCTP to dUTP and the hydrolysis of dUTP to dUMP without releasing the toxic dUTP intermediate. The chain is dCTP deaminase, dUMP-forming from Mycobacterium leprae (strain Br4923).